The primary structure comprises 341 residues: Zinc transporter 6, chloroplastic (341 aa).

The chain crosses the membrane as a helical span at residues 28 to 48 (IVAVFAIFLTSVFGVWGPVLL). Topologically, residues 49–61 (AKYFHGKPLYDKA) are cytoplasmic. A helical transmembrane segment spans residues 62–82 (ILVIKCFAAGVILSTSLVHVL). Over 83–102 (PEAFESLADCQVSSRHPWKD) the chain is Lumenal. A helical membrane pass occupies residues 103 to 123 (FPFAGLVTMIGAITALLVDLT). Over 124–179 (ASEHMGHGGGGGGDGGMEYMPVGKAVGGLEMKEGKCGADLEIQENSEEEIVKMKQR) the chain is Cytoplasmic. The helical transmembrane segment at 180 to 200 (LVSQVLEIGIIFHSVIIGVTM) threads the bilayer. The Lumenal segment spans residues 201–211 (GMSQNKCTIRP). The chain crosses the membrane as a helical span at residues 212–232 (LIAALSFHQIFEGLGLGGCIA). Residues 233-243 (QAGFKAGTVVY) are Cytoplasmic-facing. Residues 244–264 (MCLMFAVTTPLGIVLGMVIFA) traverse the membrane as a helical segment. Over 265-280 (ATGYDDQNPNALIMEG) the chain is Lumenal. A helical transmembrane segment spans residues 281–301 (LLGSFSSGILIYMALVDLIAL). The Cytoplasmic portion of the chain corresponds to 302–320 (DFFHNKMLTTCGESGSRLK). A helical membrane pass occupies residues 321-341 (KLCFVALVLGSASMSLLALWA).

This sequence belongs to the ZIP transporter (TC 2.A.5) family.

The protein localises to the plastid. The protein resides in the chloroplast thylakoid membrane. In terms of biological role, may play a role in the transport of zinc in the plastids. The sequence is that of Zinc transporter 6, chloroplastic (ZIP6) from Arabidopsis thaliana (Mouse-ear cress).